The following is a 352-amino-acid chain: Fe(3+) ions import ATP-binding protein FbpC (352 aa).

The region spanning 5–239 is the ABC transporter domain; sequence LHIGHLSKSF…PADLDAVLFI (235 aa). Residue 37-44 participates in ATP binding; the sequence is GASGCGKT.

This sequence belongs to the ABC transporter superfamily. Fe(3+) ion importer (TC 3.A.1.10) family. In terms of assembly, the complex is composed of two ATP-binding proteins (FbpC), two transmembrane proteins (FbpB) and a solute-binding protein (FbpA).

It is found in the cell inner membrane. The enzyme catalyses Fe(3+)(out) + ATP + H2O = Fe(3+)(in) + ADP + phosphate + H(+). In terms of biological role, part of the ABC transporter complex FbpABC involved in Fe(3+) ions import. Responsible for energy coupling to the transport system. The protein is Fe(3+) ions import ATP-binding protein FbpC of Neisseria gonorrhoeae.